The primary structure comprises 500 residues: MSSPLSQAFAQNFLGHSPRWYKLTVLAFLLLNPLLLWLAGPVTSAWVLVGEFIFTLAMALKCYPLQPGGLLVLEALLLGLATPEALYAELQHNFPVLLLLMFMVAGIYFMKDLLLLLFSRLLLGVRSKTLLSLLFCLLAALLSAFLDALTVTAVVISVAVAFFAVYHRVASGQRASEDYDPATDRQVPELHRAHLEEFRAFLRSLLMHAAVGTALGGVCTLVGEPQNLLIGHEAGWHFVEFFRQVAPVSMPVLAAGLLTCVLLEKSRRFGYGAQLPAAVRQVLAEYAASESRKRGAQQKAALLVQALAALVLIVGLALHVAEVGLIGLLVIVLITAFTGVTDEHQIGRAFQEALPFTALLVVFFAVVAVIHQQHLFTPIIQAVLALPAERQPGMLFIANGLLSAISDNVFVATIYITEVKQALDAGHMSREHFDTLAVAINTGTNLPSVATPNGQAAFLFLLTSSIAPLVRLSYGRMVWMALPYTLVMGGLGWWAVSHWL.

12 helical membrane passes run 28–50, 68–88, 98–118, 121–141, 145–165, 205–225, 244–264, 311–331, 350–370, 394–414, 449–469, and 477–497; these read FLLLNPLLLWLAGPVTSAWVLVG, GGLLVLEALLLGLATPEALYA, LLLMFMVAGIYFMKDLLLLLF, LLLGVRSKTLLSLLFCLLAAL, FLDALTVTAVVISVAVAFFAV, LLMHAAVGTALGGVCTLVGEP, QVAPVSMPVLAAGLLTCVLLE, VLIVGLALHVAEVGLIGLLVI, FQEALPFTALLVVFFAVVAVI, MLFIANGLLSAISDNVFVATI, VATPNGQAAFLFLLTSSIAPL, and MVWMALPYTLVMGGLGWWAVS.

The protein belongs to the NhaB Na(+)/H(+) (TC 2.A.34) antiporter family.

It localises to the cell inner membrane. The catalysed reaction is 2 Na(+)(in) + 3 H(+)(out) = 2 Na(+)(out) + 3 H(+)(in). Its function is as follows. Na(+)/H(+) antiporter that extrudes sodium in exchange for external protons. The chain is Na(+)/H(+) antiporter NhaB from Pseudomonas aeruginosa (strain LESB58).